The following is a 612-amino-acid chain: Phosphopentomutase (612 aa).

Ala2 bears the N-acetylalanine mark. Residues Arg63 and Ser165 each contribute to the alpha-D-glucose 1,6-bisphosphate site. Catalysis depends on Ser165, which acts as the Phosphoserine intermediate. The Mg(2+) site is built by Ser165, Asp322, Asp324, and Asp326. A Phosphoserine modification is found at Ser165. Alpha-D-glucose 1,6-bisphosphate contacts are provided by Asp326, Arg327, Thr400, Glu424, and Lys438.

Belongs to the phosphohexose mutase family. As to quaternary structure, monomer. Mg(2+) serves as cofactor.

The protein localises to the cytoplasm. It is found in the cytosol. It carries out the reaction alpha-D-ribose 1-phosphate = D-ribose 5-phosphate. It catalyses the reaction 2-deoxy-alpha-D-ribose 1-phosphate = 2-deoxy-D-ribose 5-phosphate. The catalysed reaction is alpha-D-glucose 1-phosphate = alpha-D-glucose 6-phosphate. The enzyme catalyses O-phospho-L-seryl-[protein] + alpha-D-glucose 1-phosphate = alpha-D-glucose 1,6-bisphosphate + L-seryl-[protein]. It carries out the reaction alpha-D-glucose 1,6-bisphosphate + L-seryl-[protein] = O-phospho-L-seryl-[protein] + alpha-D-glucose 6-phosphate. In terms of biological role, catalyzes the conversion of the nucleoside breakdown products ribose-1-phosphate and deoxyribose-1-phosphate to the corresponding 5-phosphopentoses. Catalyzes the reversible isomerization of alpha-D-glucose 1-phosphate to alpha-D-glucose 6-phosphate but with a lower catalytic efficiency. The mechanism proceeds via the intermediate compound alpha-D-glucose 1,6-bisphosphate. In vitro, also has a low glucose 1,6-bisphosphate synthase activity which is most probably not physiologically relevant. The chain is Phosphopentomutase (PGM2) from Pongo abelii (Sumatran orangutan).